The sequence spans 240 residues: Glutathione S-transferase U9 (240 aa).

Residues 7–86 (NKVILHGSFA…YIDETWSNGP (80 aa)) form the GST N-terminal domain. Glutathione is bound by residues 17–18 (SP), 43–44 (NK), 57–58 (KI), and 70–71 (ES). Positions 92–226 (DPYRRSKVRF…EQILEILRAF (135 aa)) constitute a GST C-terminal domain. Position 161 is a phosphothreonine (Thr161).

The protein belongs to the GST superfamily. Tau family.

Its subcellular location is the cytoplasm. It is found in the cytosol. The enzyme catalyses RX + glutathione = an S-substituted glutathione + a halide anion + H(+). In terms of biological role, may be involved in the conjugation of reduced glutathione to a wide number of exogenous and endogenous hydrophobic electrophiles and have a detoxification role against certain herbicides. In Arabidopsis thaliana (Mouse-ear cress), this protein is Glutathione S-transferase U9 (GSTU9).